Reading from the N-terminus, the 270-residue chain is MAATKQGGGDDGRCARGVVLERTGARMGAERVALLAAIGRTGSISAAAREVGLSYKAAWDGVQAMNNLLAAPVVTAAPGGKAGGGAVLTPAGEKLIAAYGAIEAGVAKLLSSFEKSLNLDPAEVLRGLSLRTSARNAWACKVWSVAADDVAAQVRMRLGEGQDLTAVITARSAAEMRLAPGSEVLALVKSNFVLLAGAGVPERLSVRNRVRGRVIERIDAPLSSEVTLDLGGGKTITATITRDSAEMLDLHPGVETTALIKSSHVILALP.

Mop domains are found at residues 131–197 and 203–269; these read RTSA…LLAG and RLSV…ILAL.

Belongs to the ModE family.

The protein is Molybdenum-pterin-binding protein MopB (mopB) of Rhodobacter capsulatus (Rhodopseudomonas capsulata).